A 250-amino-acid chain; its full sequence is UPF0736 protein BPUM_1067 (250 aa).

Belongs to the UPF0736 family.

This is UPF0736 protein BPUM_1067 from Bacillus pumilus (strain SAFR-032).